A 205-amino-acid chain; its full sequence is Outer-membrane lipoprotein carrier protein (205 aa).

Residues 1-21 (MKKIVLLVTLVFSINYSFANA) form the signal peptide.

Belongs to the LolA family. In terms of assembly, monomer.

It localises to the periplasm. Its function is as follows. Participates in the translocation of lipoproteins from the inner membrane to the outer membrane. Only forms a complex with a lipoprotein if the residue after the N-terminal Cys is not an aspartate (The Asp acts as a targeting signal to indicate that the lipoprotein should stay in the inner membrane). The chain is Outer-membrane lipoprotein carrier protein from Francisella philomiragia subsp. philomiragia (strain ATCC 25017 / CCUG 19701 / FSC 153 / O#319-036).